Reading from the N-terminus, the 77-residue chain is Acyl carrier protein (77 aa).

The 76-residue stretch at 2-77 folds into the Carrier domain; that stretch reads SDVAEKVKKI…DAIAYIEEKK (76 aa). Position 37 is an O-(pantetheine 4'-phosphoryl)serine (Ser-37).

The protein belongs to the acyl carrier protein (ACP) family. 4'-phosphopantetheine is transferred from CoA to a specific serine of apo-ACP by AcpS. This modification is essential for activity because fatty acids are bound in thioester linkage to the sulfhydryl of the prosthetic group.

The protein localises to the cytoplasm. It participates in lipid metabolism; fatty acid biosynthesis. In terms of biological role, carrier of the growing fatty acid chain in fatty acid biosynthesis. The protein is Acyl carrier protein of Desulfovibrio desulfuricans (strain ATCC 27774 / DSM 6949 / MB).